Reading from the N-terminus, the 201-residue chain is Oligoribonuclease (201 aa).

The region spanning 5-169 (MVWIDCEMTG…ADIRDSITEL (165 aa)) is the Exonuclease domain. The active site involves Y126.

It belongs to the oligoribonuclease family.

The protein localises to the cytoplasm. 3'-to-5' exoribonuclease specific for small oligoribonucleotides. This Streptomyces griseus protein is Oligoribonuclease.